We begin with the raw amino-acid sequence, 1047 residues long: Carbamoyl phosphate synthase large chain (1047 aa).

Residues 1–398 (MPRRDDIHRI…ALMKAIASLD (398 aa)) form a carboxyphosphate synthetic domain region. ATP-binding residues include Arg-129, Arg-169, Gly-175, Gly-176, Glu-208, Leu-210, Glu-215, Gly-241, Val-242, His-243, Gln-284, and Glu-296. The 193-residue stretch at 133-325 (YEFLKAMGEP…IARIAAKIAA (193 aa)) folds into the ATP-grasp 1 domain. Residues Gln-284, Glu-296, and Asn-298 each contribute to the Mg(2+) site. Gln-284, Glu-296, and Asn-298 together coordinate Mn(2+). Positions 399–539 (NAFSSNIRLH…YSTYEDEDET (141 aa)) are oligomerization domain. The segment at 540-916 (PDLSGSIMII…ALRKSLQRSI (377 aa)) is carbamoyl phosphate synthetic domain. The region spanning 665 to 854 (SRVIEGLGIK…WVRLAVECMI (190 aa)) is the ATP-grasp 2 domain. Arg-701, Lys-738, Leu-740, Glu-745, Gly-770, Val-771, His-772, Ser-773, Gln-813, and Glu-825 together coordinate ATP. Mg(2+) contacts are provided by Gln-813, Glu-825, and Asn-827. Residues Gln-813, Glu-825, and Asn-827 each contribute to the Mn(2+) site. Residues 910 to 1047 (KSLQRSISSV…REIGDYLQVS (138 aa)) enclose the MGS-like domain. The segment at 916-1047 (ISSVLITVRD…REIGDYLQVS (132 aa)) is allosteric domain.

This sequence belongs to the CarB family. In terms of assembly, composed of two chains; the small (or glutamine) chain promotes the hydrolysis of glutamine to ammonia, which is used by the large (or ammonia) chain to synthesize carbamoyl phosphate. Tetramer of heterodimers (alpha,beta)4. It depends on Mg(2+) as a cofactor. Mn(2+) serves as cofactor.

The enzyme catalyses hydrogencarbonate + L-glutamine + 2 ATP + H2O = carbamoyl phosphate + L-glutamate + 2 ADP + phosphate + 2 H(+). The catalysed reaction is hydrogencarbonate + NH4(+) + 2 ATP = carbamoyl phosphate + 2 ADP + phosphate + 2 H(+). It functions in the pathway amino-acid biosynthesis; L-arginine biosynthesis; carbamoyl phosphate from bicarbonate: step 1/1. It participates in pyrimidine metabolism; UMP biosynthesis via de novo pathway; (S)-dihydroorotate from bicarbonate: step 1/3. Large subunit of the glutamine-dependent carbamoyl phosphate synthetase (CPSase). CPSase catalyzes the formation of carbamoyl phosphate from the ammonia moiety of glutamine, carbonate, and phosphate donated by ATP, constituting the first step of 2 biosynthetic pathways, one leading to arginine and/or urea and the other to pyrimidine nucleotides. The large subunit (synthetase) binds the substrates ammonia (free or transferred from glutamine from the small subunit), hydrogencarbonate and ATP and carries out an ATP-coupled ligase reaction, activating hydrogencarbonate by forming carboxy phosphate which reacts with ammonia to form carbamoyl phosphate. The polypeptide is Carbamoyl phosphate synthase large chain (Thermoplasma acidophilum (strain ATCC 25905 / DSM 1728 / JCM 9062 / NBRC 15155 / AMRC-C165)).